A 157-amino-acid polypeptide reads, in one-letter code: Ribosomal RNA large subunit methyltransferase H (157 aa).

Residues Leu-73, Gly-104, and 123–128 each bind S-adenosyl-L-methionine; that span reads LGPLTL.

It belongs to the RNA methyltransferase RlmH family. As to quaternary structure, homodimer.

The protein localises to the cytoplasm. It catalyses the reaction pseudouridine(1915) in 23S rRNA + S-adenosyl-L-methionine = N(3)-methylpseudouridine(1915) in 23S rRNA + S-adenosyl-L-homocysteine + H(+). Its function is as follows. Specifically methylates the pseudouridine at position 1915 (m3Psi1915) in 23S rRNA. In Xylella fastidiosa (strain M23), this protein is Ribosomal RNA large subunit methyltransferase H.